The primary structure comprises 415 residues: Serine hydroxymethyltransferase 1 (415 aa).

(6S)-5,6,7,8-tetrahydrofolate-binding positions include L122 and 126–128; that span reads GHL. An N6-(pyridoxal phosphate)lysine modification is found at K230.

This sequence belongs to the SHMT family. As to quaternary structure, homodimer. Pyridoxal 5'-phosphate serves as cofactor.

The protein resides in the cytoplasm. The enzyme catalyses (6R)-5,10-methylene-5,6,7,8-tetrahydrofolate + glycine + H2O = (6S)-5,6,7,8-tetrahydrofolate + L-serine. Its pathway is one-carbon metabolism; tetrahydrofolate interconversion. It participates in amino-acid biosynthesis; glycine biosynthesis; glycine from L-serine: step 1/1. Catalyzes the reversible interconversion of serine and glycine with tetrahydrofolate (THF) serving as the one-carbon carrier. This reaction serves as the major source of one-carbon groups required for the biosynthesis of purines, thymidylate, methionine, and other important biomolecules. Also exhibits THF-independent aldolase activity toward beta-hydroxyamino acids, producing glycine and aldehydes, via a retro-aldol mechanism. In Burkholderia mallei (strain ATCC 23344), this protein is Serine hydroxymethyltransferase 1.